Reading from the N-terminus, the 564-residue chain is Eukaryotic translation initiation factor 3 subunit L (564 aa).

Residue Ser-2 is modified to N-acetylserine. One can recognise a PCI domain in the interval 331–537; it reads DAIRVFANIL…IHIADTKVAR (207 aa). Lys-465 and Lys-549 each carry N6-acetyllysine.

The protein belongs to the eIF-3 subunit L family. As to quaternary structure, component of the eukaryotic translation initiation factor 3 (eIF-3) complex, which is composed of 13 subunits: EIF3A, EIF3B, EIF3C, EIF3D, EIF3E, EIF3F, EIF3G, EIF3H, EIF3I, EIF3J, EIF3K, EIF3L and EIF3M. The eIF-3 complex appears to include 3 stable modules: module A is composed of EIF3A, EIF3B, EIF3G and EIF3I; module B is composed of EIF3F, EIF3H, and EIF3M; and module C is composed of EIF3C, EIF3D, EIF3E, EIF3K and EIF3L. EIF3C of module C binds EIF3B of module A and EIF3H of module B, thereby linking the three modules. EIF3J is a labile subunit that binds to the eIF-3 complex via EIF3B. The eIF-3 complex may interact with RPS6KB1 under conditions of nutrient depletion. Mitogenic stimulation may lead to binding and activation of a complex composed of MTOR and RPTOR, leading to phosphorylation and release of RPS6KB1 and binding of EIF4B to eIF-3. Interacts with RRN3.

The protein resides in the cytoplasm. In terms of biological role, component of the eukaryotic translation initiation factor 3 (eIF-3) complex, which is required for several steps in the initiation of protein synthesis. The eIF-3 complex associates with the 40S ribosome and facilitates the recruitment of eIF-1, eIF-1A, eIF-2:GTP:methionyl-tRNAi and eIF-5 to form the 43S pre-initiation complex (43S PIC). The eIF-3 complex stimulates mRNA recruitment to the 43S PIC and scanning of the mRNA for AUG recognition. The eIF-3 complex is also required for disassembly and recycling of post-termination ribosomal complexes and subsequently prevents premature joining of the 40S and 60S ribosomal subunits prior to initiation. The eIF-3 complex specifically targets and initiates translation of a subset of mRNAs involved in cell proliferation, including cell cycling, differentiation and apoptosis, and uses different modes of RNA stem-loop binding to exert either translational activation or repression. This is Eukaryotic translation initiation factor 3 subunit L (Eif3l) from Mus musculus (Mouse).